The chain runs to 88 residues: uncharacterized protein (88 aa).

The helical transmembrane segment at 34–54 (IIIAVILIFFLTIVGLFYLII) threads the bilayer.

The protein resides in the membrane. This is an uncharacterized protein from Ureaplasma parvum serovar 3 (strain ATCC 700970).